The primary structure comprises 707 residues: Elongation factor G (707 aa).

Residues 9–293 (HDVRNIGIMA…GVVDYLPSPE (285 aa)) form the tr-type G domain. Residues 18 to 25 (AHIDAGKT), 90 to 94 (DTPGH), and 144 to 147 (NKMD) contribute to the GTP site.

It belongs to the TRAFAC class translation factor GTPase superfamily. Classic translation factor GTPase family. EF-G/EF-2 subfamily.

It localises to the cytoplasm. Catalyzes the GTP-dependent ribosomal translocation step during translation elongation. During this step, the ribosome changes from the pre-translocational (PRE) to the post-translocational (POST) state as the newly formed A-site-bound peptidyl-tRNA and P-site-bound deacylated tRNA move to the P and E sites, respectively. Catalyzes the coordinated movement of the two tRNA molecules, the mRNA and conformational changes in the ribosome. This Bifidobacterium longum (strain DJO10A) protein is Elongation factor G.